Here is an 817-residue protein sequence, read N- to C-terminus: Lon protease 1 (817 aa).

Residues 18–216 (VPLLPLRDII…KLYELMQGEI (199 aa)) form the Lon N-terminal domain. 368-375 (GPPGVGKT) lines the ATP pocket. In terms of domain architecture, Lon proteolytic spans 604–785 (EDQVGIVTGL…DDVLREALVL (182 aa)). Residues serine 691 and lysine 734 contribute to the active site. A disordered region spans residues 789 to 817 (EEFGRKPTTDGGKLGGTTELPASPAVAPA).

This sequence belongs to the peptidase S16 family. Homohexamer. Organized in a ring with a central cavity.

The protein resides in the cytoplasm. The enzyme catalyses Hydrolysis of proteins in presence of ATP.. Its function is as follows. ATP-dependent serine protease that mediates the selective degradation of mutant and abnormal proteins as well as certain short-lived regulatory proteins. Required for cellular homeostasis and for survival from DNA damage and developmental changes induced by stress. Degrades polypeptides processively to yield small peptide fragments that are 5 to 10 amino acids long. Binds to DNA in a double-stranded, site-specific manner. This chain is Lon protease 1, found in Myxococcus xanthus.